Reading from the N-terminus, the 213-residue chain is Large ribosomal subunit protein uL3 (213 aa).

This sequence belongs to the universal ribosomal protein uL3 family. In terms of assembly, part of the 50S ribosomal subunit. Forms a cluster with proteins L14 and L19.

Functionally, one of the primary rRNA binding proteins, it binds directly near the 3'-end of the 23S rRNA, where it nucleates assembly of the 50S subunit. The chain is Large ribosomal subunit protein uL3 from Petrotoga mobilis (strain DSM 10674 / SJ95).